Reading from the N-terminus, the 204-residue chain is Large ribosomal subunit protein uL4 (204 aa).

The tract at residues 49-75 (TKGRSDVSGGGKKPWRQKGRGGARAGS) is disordered.

This sequence belongs to the universal ribosomal protein uL4 family. In terms of assembly, part of the 50S ribosomal subunit.

One of the primary rRNA binding proteins, this protein initially binds near the 5'-end of the 23S rRNA. It is important during the early stages of 50S assembly. It makes multiple contacts with different domains of the 23S rRNA in the assembled 50S subunit and ribosome. Its function is as follows. Forms part of the polypeptide exit tunnel. This Campylobacter jejuni subsp. jejuni serotype O:23/36 (strain 81-176) protein is Large ribosomal subunit protein uL4.